A 131-amino-acid polypeptide reads, in one-letter code: Small ribosomal subunit protein uS11 (131 aa).

Residues Met1 to Arg15 show a composition bias toward basic residues. The disordered stretch occupies residues Met1 to Ala23.

It belongs to the universal ribosomal protein uS11 family. As to quaternary structure, part of the 30S ribosomal subunit. Interacts with proteins S7 and S18. Binds to IF-3.

Functionally, located on the platform of the 30S subunit, it bridges several disparate RNA helices of the 16S rRNA. Forms part of the Shine-Dalgarno cleft in the 70S ribosome. This Clostridium beijerinckii (strain ATCC 51743 / NCIMB 8052) (Clostridium acetobutylicum) protein is Small ribosomal subunit protein uS11.